The following is a 221-amino-acid chain: Alpha-ketoglutarate-dependent dioxygenase alkB homolog 7, mitochondrial (221 aa).

Residues 1–23 (MAGGGQVVLRTLSQQGWVRGSGA) constitute a mitochondrion transit peptide. Residues histidine 121 and aspartate 123 each contribute to the Fe cation site. Tyrosine 165 is a 2-oxoglutarate binding site. Residue histidine 177 coordinates Fe cation. 2-oxoglutarate contacts are provided by residues 197–199 (RIS) and arginine 203.

It belongs to the alkB family. Fe(2+) is required as a cofactor.

The protein resides in the mitochondrion matrix. Its function is as follows. May function as protein hydroxylase; can catalyze auto-hydroxylation at Leu-110 (in vitro), but this activity may be due to the absence of the true substrate. Required to induce programmed necrosis in response to DNA damage caused by cytotoxic alkylating agents. Acts by triggering the collapse of mitochondrial membrane potential and loss of mitochondrial function that leads to energy depletion and cell death. ALKBH7-mediated necrosis is probably required to prevent the accumulation of cells with DNA damage. Does not display DNA demethylase activity. Involved in fatty acid metabolism. In Bos taurus (Bovine), this protein is Alpha-ketoglutarate-dependent dioxygenase alkB homolog 7, mitochondrial (ALKBH7).